Consider the following 366-residue polypeptide: GTP cyclohydrolase 1 type 2 homolog (366 aa).

5 residues coordinate Zn(2+): histidine 64, histidine 65, aspartate 102, histidine 326, and glutamate 329.

This sequence belongs to the GTP cyclohydrolase I type 2/NIF3 family. In terms of assembly, toroid-shaped homohexamer that has a central cavity of about 38 Angstroms diameter.

The protein is GTP cyclohydrolase 1 type 2 homolog of Staphylococcus aureus (strain Mu50 / ATCC 700699).